Here is a 208-residue protein sequence, read N- to C-terminus: Imidazole glycerol phosphate synthase subunit HisH (208 aa).

The Glutamine amidotransferase type-1 domain occupies 1–206 (MIVIIDYDTG…KEVTESCKSS (206 aa)). C79 acts as the Nucleophile in catalysis. Active-site residues include H181 and E183.

As to quaternary structure, heterodimer of HisH and HisF.

The protein localises to the cytoplasm. It carries out the reaction 5-[(5-phospho-1-deoxy-D-ribulos-1-ylimino)methylamino]-1-(5-phospho-beta-D-ribosyl)imidazole-4-carboxamide + L-glutamine = D-erythro-1-(imidazol-4-yl)glycerol 3-phosphate + 5-amino-1-(5-phospho-beta-D-ribosyl)imidazole-4-carboxamide + L-glutamate + H(+). It catalyses the reaction L-glutamine + H2O = L-glutamate + NH4(+). It participates in amino-acid biosynthesis; L-histidine biosynthesis; L-histidine from 5-phospho-alpha-D-ribose 1-diphosphate: step 5/9. Its function is as follows. IGPS catalyzes the conversion of PRFAR and glutamine to IGP, AICAR and glutamate. The HisH subunit catalyzes the hydrolysis of glutamine to glutamate and ammonia as part of the synthesis of IGP and AICAR. The resulting ammonia molecule is channeled to the active site of HisF. In Listeria innocua serovar 6a (strain ATCC BAA-680 / CLIP 11262), this protein is Imidazole glycerol phosphate synthase subunit HisH.